The sequence spans 586 residues: Pectinesterase 1 (586 aa).

A signal peptide spans 1-49; it reads MDSVNSFKGYGKVDEAQDLALKKKTRKRLLLLSISVVVLIAVIIAAVVA. Residues N57, N97, N154, N201, and N207 are each glycosylated (N-linked (GlcNAc...) asparagine). The RRLM cleavage motif motif lies at 250 to 253; that stretch reads RRLM. An RRLL cleavage motif motif is present at residues 269-272; that stretch reads RRLL. The substrate site is built by T355 and Q385. Residue D408 is the Proton donor of the active site. A disulfide bridge links C422 with C442. The active-site Nucleophile is the D429. The N-linked (GlcNAc...) asparagine glycan is linked to N466. Residues R492 and W494 each coordinate substrate.

It in the N-terminal section; belongs to the PMEI family. This sequence in the C-terminal section; belongs to the pectinesterase family. As to quaternary structure, interacts with SBT6.1. As to expression, expressed in siliques.

The protein localises to the secreted. It localises to the cell wall. Its subcellular location is the golgi apparatus membrane. It carries out the reaction [(1-&gt;4)-alpha-D-galacturonosyl methyl ester](n) + n H2O = [(1-&gt;4)-alpha-D-galacturonosyl](n) + n methanol + n H(+). It participates in glycan metabolism; pectin degradation; 2-dehydro-3-deoxy-D-gluconate from pectin: step 1/5. In terms of biological role, acts in the modification of cell walls via demethylesterification of cell wall pectin. Demethylates protein phosphatase 2A (PP2A) that have been reversibly carboxymethylated by LCMT1. Acts as a negative regulators of genes involved in salt stress response. This chain is Pectinesterase 1 (PME1), found in Arabidopsis thaliana (Mouse-ear cress).